The sequence spans 717 residues: Polyribonucleotide nucleotidyltransferase (717 aa).

Residues D487 and D493 each contribute to the Mg(2+) site. The 60-residue stretch at 554-613 (PRITVINVPKDKIRDVIGTGGKVIREIVEYSGCKIDIEDDGTIKIAATSDEQAQKAIDRI) folds into the KH domain. Residues 623-691 (GQIYTGKVVK…DRGKVKLSMR (69 aa)) enclose the S1 motif domain.

Belongs to the polyribonucleotide nucleotidyltransferase family. The cofactor is Mg(2+).

The protein resides in the cytoplasm. The enzyme catalyses RNA(n+1) + phosphate = RNA(n) + a ribonucleoside 5'-diphosphate. Its function is as follows. Involved in mRNA degradation. Catalyzes the phosphorolysis of single-stranded polyribonucleotides processively in the 3'- to 5'-direction. The sequence is that of Polyribonucleotide nucleotidyltransferase from Acidiphilium cryptum (strain JF-5).